Consider the following 209-residue polypeptide: Uracil phosphoribosyltransferase (209 aa).

Residues Arg79, Arg104, and 131-139 (DPMLATGNS) each bind 5-phospho-alpha-D-ribose 1-diphosphate. Residues Ile194 and 199–201 (GDA) contribute to the uracil site. Position 200 (Asp200) interacts with 5-phospho-alpha-D-ribose 1-diphosphate.

It belongs to the UPRTase family. Mg(2+) serves as cofactor.

The catalysed reaction is UMP + diphosphate = 5-phospho-alpha-D-ribose 1-diphosphate + uracil. The protein operates within pyrimidine metabolism; UMP biosynthesis via salvage pathway; UMP from uracil: step 1/1. Allosterically activated by GTP. Functionally, catalyzes the conversion of uracil and 5-phospho-alpha-D-ribose 1-diphosphate (PRPP) to UMP and diphosphate. The polypeptide is Uracil phosphoribosyltransferase (Rhizobium meliloti (strain 1021) (Ensifer meliloti)).